The primary structure comprises 295 residues: Protoheme IX farnesyltransferase (295 aa).

A run of 9 helical transmembrane segments spans residues 27-47 (IMYL…GNIH), 48-68 (PFIG…AGAI), 93-115 (IARS…VMMI), 119-136 (YLSG…SLVY), 147-167 (NIVI…TSVT), 175-195 (LILF…LSLL), 219-239 (IYIL…GIFL), 247-267 (TCAI…FVSI), and 275-295 (MFTY…ISSF).

This sequence belongs to the UbiA prenyltransferase family. Protoheme IX farnesyltransferase subfamily.

It localises to the cell inner membrane. It carries out the reaction heme b + (2E,6E)-farnesyl diphosphate + H2O = Fe(II)-heme o + diphosphate. Its pathway is porphyrin-containing compound metabolism; heme O biosynthesis; heme O from protoheme: step 1/1. In terms of biological role, converts heme B (protoheme IX) to heme O by substitution of the vinyl group on carbon 2 of heme B porphyrin ring with a hydroxyethyl farnesyl side group. In Ehrlichia chaffeensis (strain ATCC CRL-10679 / Arkansas), this protein is Protoheme IX farnesyltransferase.